A 350-amino-acid chain; its full sequence is Glycerol-3-phosphate dehydrogenase [NAD(+)], cytoplasmic (350 aa).

NAD(+) is bound by residues 11 to 16 (GSGNWG), phenylalanine 98, lysine 121, and alanine 155. Lysine 121 provides a ligand contact to substrate. Lysine 206 acts as the Proton acceptor in catalysis. NAD(+) is bound by residues arginine 270 and glutamine 299. 270-271 (RN) is a substrate binding site.

It belongs to the NAD-dependent glycerol-3-phosphate dehydrogenase family. As to quaternary structure, homodimer.

It is found in the cytoplasm. The catalysed reaction is sn-glycerol 3-phosphate + NAD(+) = dihydroxyacetone phosphate + NADH + H(+). It functions in the pathway phospholipid metabolism; alpha-glycerophosphate cycle. The chain is Glycerol-3-phosphate dehydrogenase [NAD(+)], cytoplasmic (Gpdh1) from Drosophila ezoana (Fruit fly).